A 148-amino-acid chain; its full sequence is Calcium-permeable cation-selective channel WeiTsing (148 aa).

At 1–25 the chain is on the cytoplasmic side; the sequence is METVSAVNQTLPISGGEPVKFTTYS. Residues 26 to 46 form a helical membrane-spanning segment; that stretch reads AAVHKVLVMINAGILGLLQLV. At 47–51 the chain is on the lumenal side; sequence SQQSS. The chain crosses the membrane as a helical span at residues 52–72; sequence VLETHKAAFLCFCVFILFYAV. The Cytoplasmic segment spans residues 73–90; sequence LRVREAMDVRLQPGLVPR. The chain crosses the membrane as a helical span at residues 91 to 110; the sequence is LIGHGSHLFGGLAALVLVSV. The Lumenal portion of the chain corresponds to 111–116; that stretch reads VSTAFS. A helical transmembrane segment spans residues 117–133; that stretch reads IVLFLLWFIWLSAVVYL. Residues 134-148 lie on the Cytoplasmic side of the membrane; it reads ETNKPSACPPQLPPV.

Forms pentamers with a central pore to produce an ion channel.

The protein resides in the endoplasmic reticulum membrane. The catalysed reaction is Ca(2+)(in) = Ca(2+)(out). The enzyme catalyses Na(+)(in) = Na(+)(out). Calcium-permeable cation-selective channel conferring a broad-spectrum clubroot resistance by supporting cytosolic Ca(2+) increase in root pericycle cells. Triggers immunity toward fungal pathogens such as Plasmodiophora brassicae (Pb) and induces defenses. Also permeable to sodium ion Na(+) and possibly other cations. The polypeptide is Calcium-permeable cation-selective channel WeiTsing (Arabidopsis thaliana (Mouse-ear cress)).